Consider the following 262-residue polypeptide: MIHPSAKIHPTALIEEGAVIGEDVFIGPFCIIEGTVEIKARTVLKSHVVVRGDTVIGEDNEIYQFTSIGEVNQDLKYKGEATKTIIGNSNKIREHVTIHRGTIQGCGVTAIGNNNLLMINVHVAHDCQIKNNCILANNATLAGHVELDDFVIVGGMSAIHQFVIVGAHVMLGGGSMVSQDVPPYVMAQGNHARPFGVNLEGLKRRGFDKPTMHVIRNIYKMLYRSGKTLEEVLPEIEQIAETDSAISFFVEFFKRSTRGIIR.

Belongs to the transferase hexapeptide repeat family. LpxA subfamily. As to quaternary structure, homotrimer.

Its subcellular location is the cytoplasm. The catalysed reaction is a (3R)-hydroxyacyl-[ACP] + UDP-N-acetyl-alpha-D-glucosamine = a UDP-3-O-[(3R)-3-hydroxyacyl]-N-acetyl-alpha-D-glucosamine + holo-[ACP]. The protein operates within glycolipid biosynthesis; lipid IV(A) biosynthesis; lipid IV(A) from (3R)-3-hydroxytetradecanoyl-[acyl-carrier-protein] and UDP-N-acetyl-alpha-D-glucosamine: step 1/6. Its function is as follows. Involved in the biosynthesis of lipid A, a phosphorylated glycolipid that anchors the lipopolysaccharide to the outer membrane of the cell. In Haemophilus influenzae (strain ATCC 51907 / DSM 11121 / KW20 / Rd), this protein is Acyl-[acyl-carrier-protein]--UDP-N-acetylglucosamine O-acyltransferase.